The following is a 230-amino-acid chain: Exosome complex component Rrp4 (230 aa).

Residues 60–129 (NDKVIGKVID…EIKESWLSLK (70 aa)) form the S1 motif domain. Positions 137-195 (EEGSIIYIKAPKVPRVIGKAGNMINMIKSETNTKIIVGQNGLIWIDGEPENVDLAINAI) constitute a KH domain.

This sequence belongs to the RRP4 family. Component of the archaeal exosome complex. Forms a trimer of Rrp4 and/or Csl4 subunits. The trimer associates with a hexameric ring-like arrangement composed of 3 Rrp41-Rrp42 heterodimers.

It is found in the cytoplasm. In terms of biological role, non-catalytic component of the exosome, which is a complex involved in RNA degradation. Increases the RNA binding and the efficiency of RNA degradation. Confers strong poly(A) specificity to the exosome. The polypeptide is Exosome complex component Rrp4 (Picrophilus torridus (strain ATCC 700027 / DSM 9790 / JCM 10055 / NBRC 100828 / KAW 2/3)).